Reading from the N-terminus, the 350-residue chain is Outer membrane protein A (350 aa).

The N-terminal stretch at 1-21 (MKKTAIAIAVALAGFATVAQA) is a signal peptide. 8 consecutive transmembrane segments (beta stranded) span residues 27–37 (TWYAGAKLGWS), 55–66 (QLGAGAFGGYQV), 70–78 (VGFEMGYDW), 96–107 (QGVQLTAKLGYP), 112–120 (LDVYTRLGG), 146–155 (PVFAGGIEYA), 160–167 (IATRLEYQ), and 186–194 (LLSVGVSYR). A run of 4 repeats spans residues 205–206 (AP), 207–208 (AP), 209–210 (AP), and 211–212 (AP). The 4 X 2 AA tandem repeats of A-P stretch occupies residues 205–212 (APAPAPAP). In terms of domain architecture, OmpA-like spans 214–342 (VQTKHFTLKS…RVEIEVKGVK (129 aa)). Cys-315 and Cys-327 are oxidised to a cystine.

Belongs to the outer membrane OOP (TC 1.B.6) superfamily. OmpA family. In terms of assembly, monomer and homodimer.

It is found in the cell outer membrane. With TolR probably plays a role in maintaining the position of the peptidoglycan cell wall in the periplasm. Acts as a porin with low permeability that allows slow penetration of small solutes; an internal gate slows down solute passage. In terms of biological role, required for conjugation with F-type plasmids; probably serves as the mating receptor on recipient cells. The chain is Outer membrane protein A from Salmonella typhi.